The primary structure comprises 361 residues: MTQIFNFSAGPAMLPVEVLRRAEQELCNWNGLGTSVMEISHRSKEFMQVAAESEQNLRDLLKIPSNYKVLFCHGGARAQFAAVPLNLLGERSTADYIDGGYWAHSAVNEAEKYCTPNVIDVKTRVDGLRGVKPMREWQLSDDAAFVHYCPNETIDGIAIEEEPDFGDKIVVADYSSSILSRRIDVSRYGVIYAGAQKNIGPAGLTLVIVRDDLLGKARRELPSILDYQILADNDSMFNTPPTFAWYLSGMVFKWLKEHGGLAEMEKRNQEKADLLYSAIDGNDFYRNDVAVANRSRMNVPFLLADAALDKVFLEESVAAGLHALKGHRVVGGMRASIYNAMPLEGVKALTEFMADFARRHG.

Position 42 (R42) interacts with L-glutamate. Residues 76-77 (AR), W102, T153, D173, and Q196 contribute to the pyridoxal 5'-phosphate site. K197 is modified (N6-(pyridoxal phosphate)lysine). 238–239 (NT) is a pyridoxal 5'-phosphate binding site.

This sequence belongs to the class-V pyridoxal-phosphate-dependent aminotransferase family. SerC subfamily. In terms of assembly, homodimer. Pyridoxal 5'-phosphate is required as a cofactor.

The protein resides in the cytoplasm. It carries out the reaction O-phospho-L-serine + 2-oxoglutarate = 3-phosphooxypyruvate + L-glutamate. The enzyme catalyses 4-(phosphooxy)-L-threonine + 2-oxoglutarate = (R)-3-hydroxy-2-oxo-4-phosphooxybutanoate + L-glutamate. The protein operates within amino-acid biosynthesis; L-serine biosynthesis; L-serine from 3-phospho-D-glycerate: step 2/3. Its pathway is cofactor biosynthesis; pyridoxine 5'-phosphate biosynthesis; pyridoxine 5'-phosphate from D-erythrose 4-phosphate: step 3/5. Functionally, catalyzes the reversible conversion of 3-phosphohydroxypyruvate to phosphoserine and of 3-hydroxy-2-oxo-4-phosphonooxybutanoate to phosphohydroxythreonine. This Pectobacterium carotovorum subsp. carotovorum (strain PC1) protein is Phosphoserine aminotransferase.